The primary structure comprises 227 residues: MISSKASDYQQRIGYVFTDPSLLLQALRHCSAGTPHNERLEFLGDSVVNLLIAEALFQRWPRADEGALTRARSELVRETSLASIARTMQLGEQLILGPGELKSGGHRRDSILADAVEAVIAAIYLDADLATCRTVVLPWFETALTALPVGKPEKDPKTRLQEWLQARQWSLPVYELIFESGDPHTKHFRVSCTLGELKLRTEGEGSSRRLAEQDAASHAINQLDSNK.

The region spanning 6–128 (ASDYQQRIGY…VIAAIYLDAD (123 aa)) is the RNase III domain. E41 serves as a coordination point for Mg(2+). D45 is a catalytic residue. 2 residues coordinate Mg(2+): D114 and E117. Residue E117 is part of the active site. One can recognise a DRBM domain in the interval 155-225 (DPKTRLQEWL…ASHAINQLDS (71 aa)). The span at 203–212 (GEGSSRRLAE) shows a compositional bias: basic and acidic residues. Positions 203-227 (GEGSSRRLAEQDAASHAINQLDSNK) are disordered.

The protein belongs to the ribonuclease III family. As to quaternary structure, homodimer. It depends on Mg(2+) as a cofactor.

It is found in the cytoplasm. The enzyme catalyses Endonucleolytic cleavage to 5'-phosphomonoester.. In terms of biological role, digests double-stranded RNA. Involved in the processing of primary rRNA transcript to yield the immediate precursors to the large and small rRNAs (23S and 16S). Processes some mRNAs, and tRNAs when they are encoded in the rRNA operon. Processes pre-crRNA and tracrRNA of type II CRISPR loci if present in the organism. The polypeptide is Ribonuclease 3 (Xylella fastidiosa (strain M12)).